Reading from the N-terminus, the 154-residue chain is Myoglobin (154 aa).

The Globin domain occupies 2 to 148; sequence GLSDQEWQHV…FRNDMASKYK (147 aa). A nitrite-binding site is contributed by histidine 65. An O2-binding site is contributed by histidine 65. Histidine 94 contributes to the heme b binding site.

Monomeric.

Its subcellular location is the cytoplasm. It localises to the sarcoplasm. It carries out the reaction Fe(III)-heme b-[protein] + nitric oxide + H2O = Fe(II)-heme b-[protein] + nitrite + 2 H(+). The enzyme catalyses H2O2 + AH2 = A + 2 H2O. Functionally, monomeric heme protein which primary function is to store oxygen and facilitate its diffusion within muscle tissues. Reversibly binds oxygen through a pentacoordinated heme iron and enables its timely and efficient release as needed during periods of heightened demand. Depending on the oxidative conditions of tissues and cells, and in addition to its ability to bind oxygen, it also has a nitrite reductase activity whereby it regulates the production of bioactive nitric oxide. Under stress conditions, like hypoxia and anoxia, it also protects cells against reactive oxygen species thanks to its pseudoperoxidase activity. In Dromaius novaehollandiae (Emu), this protein is Myoglobin.